A 323-amino-acid chain; its full sequence is Glyoxylate/hydroxypyruvate reductase B (323 aa).

The tract at residues 37–62 (AEHGGAGARRRHDRLQQHGGSSAAGE) is disordered. Active-site residues include Arg236 and Glu265. His284 serves as the catalytic Proton donor.

It belongs to the D-isomer specific 2-hydroxyacid dehydrogenase family. GhrB subfamily. As to quaternary structure, homodimer.

It localises to the cytoplasm. The enzyme catalyses glycolate + NADP(+) = glyoxylate + NADPH + H(+). It catalyses the reaction (R)-glycerate + NAD(+) = 3-hydroxypyruvate + NADH + H(+). The catalysed reaction is (R)-glycerate + NADP(+) = 3-hydroxypyruvate + NADPH + H(+). Its function is as follows. Catalyzes the NADPH-dependent reduction of glyoxylate and hydroxypyruvate into glycolate and glycerate, respectively. In Enterobacter agglomerans (Erwinia herbicola), this protein is Glyoxylate/hydroxypyruvate reductase B (tkrA).